The following is a 434-amino-acid chain: Mothers against decapentaplegic homolog 9 (434 aa).

The MH1 domain maps to 16–140 (PAVKRLLGWK…YRRVETPVLP (125 aa)). Zn(2+) is bound by residues C68, C113, C125, and H130. Positions 171–222 (MPHNATYPDSFQQSLGPAPPSSPGHVFPQSPCPTSYPQSPGSPSESDSPYQH) are disordered. A compositionally biased stretch (polar residues) spans 202-221 (CPTSYPQSPGSPSESDSPYQ). The MH2 domain occupies 236-434 (WCSVAYYELN…SPHNPISSVS (199 aa)).

The protein belongs to the dwarfin/SMAD family. In terms of assembly, interaction with the co-SMAD SMAD4. Interacts with PEBP2-alpha subunit. Interacts with RANBP3L. Post-translationally, phosphorylated on serine by BMP (bone morphogenetic proteins) type 1 receptor kinase. Phosphorylated by activin type I receptor-like kinase-2 (ALK-2).

The protein resides in the cytoplasm. The protein localises to the nucleus. Its function is as follows. Transcriptional modulator activated by BMP (bone morphogenetic proteins) type 1 receptor kinase. SMAD9 is a receptor-regulated SMAD (R-SMAD). Has been shown to be activated by activin type I receptor-like kinase-2 (ALK-2) which stimulates heteromerization between SMAD9 and SMAD4. ALK-2 binds TGF-beta, activin and BMP. The polypeptide is Mothers against decapentaplegic homolog 9 (Smad9) (Rattus norvegicus (Rat)).